The sequence spans 612 residues: Elongation factor 4 (612 aa).

The region spanning 11–193 (KHIRNFSIIA…KLVTDVPAPT (183 aa)) is the tr-type G domain. Residues 23 to 28 (DHGKST) and 140 to 143 (NKID) contribute to the GTP site.

This sequence belongs to the TRAFAC class translation factor GTPase superfamily. Classic translation factor GTPase family. LepA subfamily.

It is found in the cell membrane. The enzyme catalyses GTP + H2O = GDP + phosphate + H(+). Required for accurate and efficient protein synthesis under certain stress conditions. May act as a fidelity factor of the translation reaction, by catalyzing a one-codon backward translocation of tRNAs on improperly translocated ribosomes. Back-translocation proceeds from a post-translocation (POST) complex to a pre-translocation (PRE) complex, thus giving elongation factor G a second chance to translocate the tRNAs correctly. Binds to ribosomes in a GTP-dependent manner. This is Elongation factor 4 from Latilactobacillus sakei subsp. sakei (strain 23K) (Lactobacillus sakei subsp. sakei).